Consider the following 1063-residue polypeptide: Integrin alpha-8 (1063 aa).

The first 38 residues, 1–38 (MSPGASRGPRGSQAPLIAPLCCAAAALGMLLWSPACQA), serve as a signal peptide directing secretion. Residues 39–1012 (FNLDVEKLTV…TPNVSFSIPL (974 aa)) lie on the Extracellular side of the membrane. 7 FG-GAP repeats span residues 44-105 (EKLT…GSAQ), 122-183 (NGTK…AYAE), 188-240 (RNSN…IANY), 253-306 (KQTE…STDM), 307-372 (TFIQ…LLFR), 373-431 (DPQI…GLNT), and 435-498 (QVLQ…LHPM). N81 carries an N-linked (GlcNAc...) asparagine glycan. The cysteines at positions 96 and 106 are disulfide-linked. N-linked (GlcNAc...) asparagine glycosylation occurs at N122. C150 and C171 form a disulfide bridge. N-linked (GlcNAc...) asparagine glycosylation occurs at N177. C187 and C200 are oxidised to a cystine. N-linked (GlcNAc...) asparagine glycosylation occurs at N239. Ca(2+) contacts are provided by E275, T277, D279, and E283. N-linked (GlcNAc...) asparagine glycans are attached at residues N302 and N311. D329, N331, D333, L335, D337, D395, N397, D399, Y401, and D403 together coordinate Ca(2+). A Cell attachment site motif is present at residues 455-457 (RGD). D459, D461, N463, Y465, and D467 together coordinate Ca(2+). N-linked (GlcNAc...) asparagine glycosylation occurs at N504. Intrachain disulfides connect C507–C518 and C524–C580. 2 N-linked (GlcNAc...) asparagine glycosylation sites follow: N601 and N605. 2 disulfide bridges follow: C641-C647 and C713-C726. Residues N719, N737, N753, N780, N896, and N923 are each glycosylated (N-linked (GlcNAc...) asparagine). Intrachain disulfides connect C867–C924 and C929–C934. Residue N1005 is glycosylated (N-linked (GlcNAc...) asparagine). Residues 1013-1033 (WVIILAILLGLLVLAILTLAL) traverse the membrane as a helical segment. Residues 1034–1063 (WKCGFFDRARPPQEDMTDREQLTNDKTPEA) lie on the Cytoplasmic side of the membrane.

This sequence belongs to the integrin alpha chain family. In terms of assembly, heterodimer of an alpha and a beta subunit. The alpha subunit is composed of a heavy and a light chain linked by a disulfide bond. Alpha-8 associates with beta-1. As to expression, expressed in mesenchymal cells, including alveolar myofibroblasts, kidney mesangial cells and hepatic stellar cells and vascular and visceral smooth muscle (at protein level).

The protein localises to the membrane. It is found in the cell membrane. In terms of biological role, integrin alpha-8/beta-1 functions in the genesis of kidney and probably of other organs by regulating the recruitment of mesenchymal cells into epithelial structures. It recognizes the sequence R-G-D in a wide array of ligands including TNC, FN1, SPP1 TGFB1, TGFB3 and VTN. NPNT is probably its functional ligand in kidney genesis. Neuronal receptor for TNC it mediates cell-cell interactions and regulates neurite outgrowth of sensory and motor neurons. The sequence is that of Integrin alpha-8 (ITGA8) from Homo sapiens (Human).